The primary structure comprises 153 residues: Superoxide dismutase [Cu-Zn] (153 aa).

Cu cation-binding residues include histidine 45, histidine 47, and histidine 62. The cysteines at positions 56 and 145 are disulfide-linked. 4 residues coordinate Zn(2+): histidine 62, histidine 70, histidine 79, and aspartate 82. Residue histidine 119 participates in Cu cation binding.

The protein belongs to the Cu-Zn superoxide dismutase family. Homodimer. It depends on Cu cation as a cofactor. Zn(2+) is required as a cofactor.

Its subcellular location is the cytoplasm. The catalysed reaction is 2 superoxide + 2 H(+) = H2O2 + O2. In terms of biological role, destroys radicals which are normally produced within the cells and which are toxic to biological systems. The sequence is that of Superoxide dismutase [Cu-Zn] (SOD) from Schistosoma mansoni (Blood fluke).